The primary structure comprises 184 residues: Adenine phosphoribosyltransferase (184 aa).

It belongs to the purine/pyrimidine phosphoribosyltransferase family. Homodimer.

It localises to the cytoplasm. The catalysed reaction is AMP + diphosphate = 5-phospho-alpha-D-ribose 1-diphosphate + adenine. It functions in the pathway purine metabolism; AMP biosynthesis via salvage pathway; AMP from adenine: step 1/1. Its function is as follows. Catalyzes a salvage reaction resulting in the formation of AMP, that is energically less costly than de novo synthesis. The protein is Adenine phosphoribosyltransferase of Myxococcus xanthus (strain DK1622).